Consider the following 173-residue polypeptide: Macro domain-containing protein in gbd 3'region (173 aa).

In terms of domain architecture, Macro spans 1–173 (MSGEHLQVVH…NYRLYRERLS (173 aa)).

The protein belongs to the MacroD-type family.

The protein is Macro domain-containing protein in gbd 3'region of Cupriavidus necator (Alcaligenes eutrophus).